Here is a 155-residue protein sequence, read N- to C-terminus: uncharacterized protein (155 aa).

A run of 4 helical transmembrane segments spans residues 25–45 (LPMG…FGWT), 50–70 (IFWF…IMTS), 91–111 (GVKI…ESLF), and 118–138 (WGCT…PILF).

This sequence belongs to the major facilitator superfamily. CAR1 family.

The protein localises to the membrane. This is an uncharacterized protein from Schizosaccharomyces pombe (strain 972 / ATCC 24843) (Fission yeast).